The primary structure comprises 306 residues: Mating type protein SmtA-1 (306 aa).

The alpha box DNA-binding region spans 49–104; it reads APKKKVNGFMGFRSYYSPLFSQFPQKARSPFMTILWQHDPFHNEWDFMCSVYSSIR.

The protein belongs to the MATALPHA1 family.

Its subcellular location is the nucleus. Functionally, mating type proteins are sequence specific DNA-binding proteins that act as master switches in fungal differentiation by controlling gene expression in a cell type-specific fashion. Transcriptional activator that induces the transcription of alpha-specific genes. The polypeptide is Mating type protein SmtA-1 (SMTA1) (Sordaria macrospora (strain ATCC MYA-333 / DSM 997 / K(L3346) / K-hell)).